We begin with the raw amino-acid sequence, 324 residues long: HPr kinase/phosphorylase (324 aa).

Residues His-146 and Lys-167 contribute to the active site. 161–168 (GDSGLGKS) contributes to the ATP binding site. Position 168 (Ser-168) interacts with Mg(2+). Residue Asp-185 is the Proton acceptor; for phosphorylation activity. Proton donor; for dephosphorylation activity of the active site. Positions 209 to 218 (LEVRGLGLLD) are important for the catalytic mechanism of both phosphorylation and dephosphorylation. Glu-210 contacts Mg(2+). Arg-250 is an active-site residue. The tract at residues 271-276 (QVAAGR) is important for the catalytic mechanism of dephosphorylation.

This sequence belongs to the HPrK/P family. Homohexamer. The cofactor is Mg(2+).

It carries out the reaction [HPr protein]-L-serine + ATP = [HPr protein]-O-phospho-L-serine + ADP + H(+). It catalyses the reaction [HPr protein]-O-phospho-L-serine + phosphate + H(+) = [HPr protein]-L-serine + diphosphate. Functionally, catalyzes the ATP- as well as the pyrophosphate-dependent phosphorylation of a specific serine residue in HPr, a phosphocarrier protein of the phosphoenolpyruvate-dependent sugar phosphotransferase system (PTS). HprK/P also catalyzes the pyrophosphate-producing, inorganic phosphate-dependent dephosphorylation (phosphorolysis) of seryl-phosphorylated HPr (P-Ser-HPr). The sequence is that of HPr kinase/phosphorylase from Ralstonia nicotianae (strain ATCC BAA-1114 / GMI1000) (Ralstonia solanacearum).